Here is a 461-residue protein sequence, read N- to C-terminus: Bifunctional protein GlmU (461 aa).

Residues 1 to 232 are pyrophosphorylase; the sequence is MNLQIIILAA…SFEVQGINNR (232 aa). Residues 8 to 11, lysine 22, glutamine 73, and 78 to 79 contribute to the UDP-N-acetyl-alpha-D-glucosamine site; these read LAAG and GT. Aspartate 102 serves as a coordination point for Mg(2+). UDP-N-acetyl-alpha-D-glucosamine-binding residues include glycine 142, glutamate 157, and asparagine 230. A Mg(2+)-binding site is contributed by asparagine 230. A linker region spans residues 233 to 253; the sequence is QQLQQLERTWQQRAANQLMEK. The interval 254 to 461 is N-acetyltransferase; sequence GATLADANRF…WKRPVKRERD (208 aa). UDP-N-acetyl-alpha-D-glucosamine-binding residues include arginine 336 and lysine 354. Residue histidine 366 is the Proton acceptor of the active site. Tyrosine 369 and asparagine 380 together coordinate UDP-N-acetyl-alpha-D-glucosamine. Acetyl-CoA is bound by residues alanine 383, 389–390, serine 408, and alanine 426; that span reads NY.

It in the N-terminal section; belongs to the N-acetylglucosamine-1-phosphate uridyltransferase family. In the C-terminal section; belongs to the transferase hexapeptide repeat family. In terms of assembly, homotrimer. Mg(2+) is required as a cofactor.

Its subcellular location is the cytoplasm. The enzyme catalyses alpha-D-glucosamine 1-phosphate + acetyl-CoA = N-acetyl-alpha-D-glucosamine 1-phosphate + CoA + H(+). The catalysed reaction is N-acetyl-alpha-D-glucosamine 1-phosphate + UTP + H(+) = UDP-N-acetyl-alpha-D-glucosamine + diphosphate. It functions in the pathway nucleotide-sugar biosynthesis; UDP-N-acetyl-alpha-D-glucosamine biosynthesis; N-acetyl-alpha-D-glucosamine 1-phosphate from alpha-D-glucosamine 6-phosphate (route II): step 2/2. The protein operates within nucleotide-sugar biosynthesis; UDP-N-acetyl-alpha-D-glucosamine biosynthesis; UDP-N-acetyl-alpha-D-glucosamine from N-acetyl-alpha-D-glucosamine 1-phosphate: step 1/1. It participates in bacterial outer membrane biogenesis; LPS lipid A biosynthesis. Its function is as follows. Catalyzes the last two sequential reactions in the de novo biosynthetic pathway for UDP-N-acetylglucosamine (UDP-GlcNAc). The C-terminal domain catalyzes the transfer of acetyl group from acetyl coenzyme A to glucosamine-1-phosphate (GlcN-1-P) to produce N-acetylglucosamine-1-phosphate (GlcNAc-1-P), which is converted into UDP-GlcNAc by the transfer of uridine 5-monophosphate (from uridine 5-triphosphate), a reaction catalyzed by the N-terminal domain. The protein is Bifunctional protein GlmU of Legionella pneumophila (strain Paris).